The chain runs to 800 residues: Phenylalanine--tRNA ligase beta subunit (800 aa).

Residues 38–147 form the tRNA-binding domain; it reads GAELKGVVAA…PGTVPGTPIG (110 aa). The B5 domain maps to 401–477; that stretch reads VASPEVRMRW…RTLGYDAIPE (77 aa). The Mg(2+) site is built by aspartate 455, aspartate 461, glutamate 464, and glutamate 465. In terms of domain architecture, FDX-ACB spans 708–799; the sequence is PRLPAVLRDV…LRERVGAELR (92 aa).

It belongs to the phenylalanyl-tRNA synthetase beta subunit family. Type 1 subfamily. Tetramer of two alpha and two beta subunits. The cofactor is Mg(2+).

The protein localises to the cytoplasm. The enzyme catalyses tRNA(Phe) + L-phenylalanine + ATP = L-phenylalanyl-tRNA(Phe) + AMP + diphosphate + H(+). In Anaeromyxobacter dehalogenans (strain 2CP-C), this protein is Phenylalanine--tRNA ligase beta subunit.